The sequence spans 609 residues: UvrABC system protein C (609 aa).

Positions 19 to 97 (ASPGCYLWKS…IKKHNPRFNV (79 aa)) constitute a GIY-YIG domain. A UVR domain is found at 208-243 (ESLVSDLNIKMSNASERLDFEKAARYRDMLQRIQNF).

This sequence belongs to the UvrC family. In terms of assembly, interacts with UvrB in an incision complex.

The protein localises to the cytoplasm. In terms of biological role, the UvrABC repair system catalyzes the recognition and processing of DNA lesions. UvrC both incises the 5' and 3' sides of the lesion. The N-terminal half is responsible for the 3' incision and the C-terminal half is responsible for the 5' incision. The sequence is that of UvrABC system protein C from Leptospira interrogans serogroup Icterohaemorrhagiae serovar Lai (strain 56601).